We begin with the raw amino-acid sequence, 279 residues long: Proteasome subunit beta (279 aa).

Residues 1-53 (MSGTAEFPGRIPAPYLEVGSSSFVELLGSVAPELLPGRRPLPPGDMGDAAPHG) constitute a propeptide, removed in mature form; by autocatalysis. Residue threonine 54 is the Nucleophile of the active site.

The protein belongs to the peptidase T1B family. As to quaternary structure, the 20S proteasome core is composed of 14 alpha and 14 beta subunits that assemble into four stacked heptameric rings, resulting in a barrel-shaped structure. The two inner rings, each composed of seven catalytic beta subunits, are sandwiched by two outer rings, each composed of seven alpha subunits. The catalytic chamber with the active sites is on the inside of the barrel. Has a gated structure, the ends of the cylinder being occluded by the N-termini of the alpha-subunits. Is capped by the proteasome-associated ATPase, ARC.

Its subcellular location is the cytoplasm. It carries out the reaction Cleavage of peptide bonds with very broad specificity.. It functions in the pathway protein degradation; proteasomal Pup-dependent pathway. The formation of the proteasomal ATPase ARC-20S proteasome complex, likely via the docking of the C-termini of ARC into the intersubunit pockets in the alpha-rings, may trigger opening of the gate for substrate entry. Interconversion between the open-gate and close-gate conformations leads to a dynamic regulation of the 20S proteasome proteolysis activity. In terms of biological role, component of the proteasome core, a large protease complex with broad specificity involved in protein degradation. The polypeptide is Proteasome subunit beta (Stackebrandtia nassauensis (strain DSM 44728 / CIP 108903 / NRRL B-16338 / NBRC 102104 / LLR-40K-21)).